The sequence spans 340 residues: MKVTILGAGAWGTAIASQAARQQSAGDVSLWSRDPSQLLEIEKTGENQAYLPGIKLPKSIKLENDFSNAIQRLSSNDLLVIATPMSGLSQTIAQVLKLAKQPLNIIWLCKGLEPNTSLLPHQVVERENSLHNHGIKHAYGALSGPSFAHEVGAGMPCALTVASTSTSLCEIVQAAFHHGNMRIYSSDDLIGVELGGAVKNVLAIAAGIGDGLNLGLNARAAVLTRGLAEMMRLVKAVGGKSETCMGLTGVGDLILTATGDLSRNRRVGLELAAGKSLPEILANLGHVAEGVLCAAAVGDLAKRLDVEMPITAMMGDVLSGQLTPQDAVKKLMGRDPKIET.

Tryptophan 11, arginine 33, and lysine 110 together coordinate NADPH. The sn-glycerol 3-phosphate site is built by lysine 110, glycine 144, and serine 146. Residue alanine 148 coordinates NADPH. The sn-glycerol 3-phosphate site is built by lysine 199, aspartate 252, serine 262, arginine 263, and asparagine 264. Lysine 199 (proton acceptor) is an active-site residue. Arginine 263 provides a ligand contact to NADPH. NADPH-binding residues include valine 287 and glutamate 289.

Belongs to the NAD-dependent glycerol-3-phosphate dehydrogenase family.

The protein localises to the cytoplasm. It carries out the reaction sn-glycerol 3-phosphate + NAD(+) = dihydroxyacetone phosphate + NADH + H(+). The catalysed reaction is sn-glycerol 3-phosphate + NADP(+) = dihydroxyacetone phosphate + NADPH + H(+). It participates in membrane lipid metabolism; glycerophospholipid metabolism. Catalyzes the reduction of the glycolytic intermediate dihydroxyacetone phosphate (DHAP) to sn-glycerol 3-phosphate (G3P), the key precursor for phospholipid synthesis. In Polynucleobacter asymbioticus (strain DSM 18221 / CIP 109841 / QLW-P1DMWA-1) (Polynucleobacter necessarius subsp. asymbioticus), this protein is Glycerol-3-phosphate dehydrogenase [NAD(P)+].